Here is a 498-residue protein sequence, read N- to C-terminus: MKINPTTSVPGVSTLEKENLGRISQIIGPVLDVAFPPGKMPNIYNALVVKGQDTAGQQINVTCEVQQLLGNNRVRAVAMSATDGLTRGMEVIDTGAALSVPVGGATLGRIFNVLGEPVDNLGPVDTRTTSPIHKSAPAFIQLDTKLSIFETGIKVVDLLAPYRRGGKIGLFGGAGVGKTVLIMELINNIAKAHGGVSVFGGVGERTREGNDLYMEMKESGVINEQNLAESKVALVYGQMNEPPGARMRVGLTALTMAEYFRDVNEQDVLLFIDNIFRFVQAGSEVSALLGRMPSAVGYQPTLSTEMGTLQERITSTKEGSITSIQAVYVPADDLTDPAPATTFAHLDATTVLSRGLAAKGIYPAVDPLDSTSTMLQPRIVGEEHYETAQRVKQTLQRYKELQDIIAILGLDELSEEDRLTVARARKIERFLSQPFFVAEVFTGSPGKYVGLAETIRGFKLILSGELDGLPEQAFYLVGNIDEATAKATNLEMESKLKK.

172-179 contributes to the ATP binding site; sequence GGAGVGKT.

This sequence belongs to the ATPase alpha/beta chains family. In terms of assembly, F-type ATPases have 2 components, CF(1) - the catalytic core - and CF(0) - the membrane proton channel. CF(1) has five subunits: alpha(3), beta(3), gamma(1), delta(1), epsilon(1). CF(0) has four main subunits: a(1), b(1), b'(1) and c(9-12).

Its subcellular location is the plastid. It localises to the chloroplast thylakoid membrane. The enzyme catalyses ATP + H2O + 4 H(+)(in) = ADP + phosphate + 5 H(+)(out). Functionally, produces ATP from ADP in the presence of a proton gradient across the membrane. The catalytic sites are hosted primarily by the beta subunits. The chain is ATP synthase subunit beta, chloroplastic from Gossypium hirsutum (Upland cotton).